The chain runs to 163 residues: uncharacterized protein (163 aa).

Disordered stretches follow at residues 1–78 and 115–163; these read MHSL…NPHS and PKWL…LPCH.

This is an uncharacterized protein from Homo sapiens (Human).